The primary structure comprises 333 residues: Ornithine carbamoyltransferase (333 aa).

Carbamoyl phosphate-binding positions include 57-60 (STRT), Q83, R107, and 134-137 (HPTQ). L-ornithine-binding positions include N168, D232, and 236–237 (SM). Residues 274-275 (CL) and R319 contribute to the carbamoyl phosphate site.

Belongs to the aspartate/ornithine carbamoyltransferase superfamily. OTCase family.

Its subcellular location is the cytoplasm. It catalyses the reaction carbamoyl phosphate + L-ornithine = L-citrulline + phosphate + H(+). It participates in amino-acid biosynthesis; L-arginine biosynthesis; L-arginine from L-ornithine and carbamoyl phosphate: step 1/3. In terms of biological role, reversibly catalyzes the transfer of the carbamoyl group from carbamoyl phosphate (CP) to the N(epsilon) atom of ornithine (ORN) to produce L-citrulline. This is Ornithine carbamoyltransferase from Photobacterium profundum (strain SS9).